A 139-amino-acid chain; its full sequence is uncharacterized protein (139 aa).

Positions 83 to 109 are disordered; the sequence is LIPPKKTSPATSSSLKPPRRPRGCLNG. Residues 86–98 show a composition bias toward low complexity; that stretch reads PKKTSPATSSSLK.

It to M.pneumoniae MPN_091 and MPN_463.

This is an uncharacterized protein from Mycoplasma pneumoniae (strain ATCC 29342 / M129 / Subtype 1) (Mycoplasmoides pneumoniae).